The chain runs to 155 residues: 6,7-dimethyl-8-ribityllumazine synthase (155 aa).

5-amino-6-(D-ribitylamino)uracil is bound by residues phenylalanine 23, 57–59 (AFE), and 81–83 (AVI). A (2S)-2-hydroxy-3-oxobutyl phosphate-binding site is contributed by 86–87 (AT). Residue histidine 89 is the Proton donor of the active site. Residue phenylalanine 114 coordinates 5-amino-6-(D-ribitylamino)uracil. Arginine 128 contacts (2S)-2-hydroxy-3-oxobutyl phosphate.

This sequence belongs to the DMRL synthase family.

The catalysed reaction is (2S)-2-hydroxy-3-oxobutyl phosphate + 5-amino-6-(D-ribitylamino)uracil = 6,7-dimethyl-8-(1-D-ribityl)lumazine + phosphate + 2 H2O + H(+). Its pathway is cofactor biosynthesis; riboflavin biosynthesis; riboflavin from 2-hydroxy-3-oxobutyl phosphate and 5-amino-6-(D-ribitylamino)uracil: step 1/2. In terms of biological role, catalyzes the formation of 6,7-dimethyl-8-ribityllumazine by condensation of 5-amino-6-(D-ribitylamino)uracil with 3,4-dihydroxy-2-butanone 4-phosphate. This is the penultimate step in the biosynthesis of riboflavin. This is 6,7-dimethyl-8-ribityllumazine synthase from Geotalea uraniireducens (strain Rf4) (Geobacter uraniireducens).